A 317-amino-acid chain; its full sequence is Transaldolase (317 aa).

Lys126 acts as the Schiff-base intermediate with substrate in catalysis.

This sequence belongs to the transaldolase family. Type 1 subfamily. In terms of assembly, homodimer.

It is found in the cytoplasm. The catalysed reaction is D-sedoheptulose 7-phosphate + D-glyceraldehyde 3-phosphate = D-erythrose 4-phosphate + beta-D-fructose 6-phosphate. Its pathway is carbohydrate degradation; pentose phosphate pathway; D-glyceraldehyde 3-phosphate and beta-D-fructose 6-phosphate from D-ribose 5-phosphate and D-xylulose 5-phosphate (non-oxidative stage): step 2/3. Functionally, transaldolase is important for the balance of metabolites in the pentose-phosphate pathway. The sequence is that of Transaldolase from Paraburkholderia phytofirmans (strain DSM 17436 / LMG 22146 / PsJN) (Burkholderia phytofirmans).